The chain runs to 266 residues: MKIAIAGTIGRMGKMLIEAVLNTADAQLVGALEHTSCPQLGEDAGAFLGKKTGVLISSDVAQVLANAQFLIDFTRPEGTMAHLAIAEKTGTKMIIGTTGLSADQIAGLKKVSANLAIVFAPNMSVGVNATFKLLEIAAKMLSQGYDIEIIEAHHKHKVDAPSGTALKMGEVIAEALGEKLDDVAVYAREGHTGERKEGSIGFAIIRGGDIVGDHTVLFAGDGERIEISHKSSSRQSYAQGSLRAARFLQNQKNGLFDMQDVLGLRK.

Residues 7–12 (GTIGRM), Glu33, 96–98 (GTT), and 120–123 (APNM) contribute to the NAD(+) site. The Proton donor/acceptor role is filled by His153. His154 contributes to the (S)-2,3,4,5-tetrahydrodipicolinate binding site. Lys157 acts as the Proton donor in catalysis. 163 to 164 (GT) contacts (S)-2,3,4,5-tetrahydrodipicolinate.

It belongs to the DapB family.

It localises to the cytoplasm. The enzyme catalyses (S)-2,3,4,5-tetrahydrodipicolinate + NAD(+) + H2O = (2S,4S)-4-hydroxy-2,3,4,5-tetrahydrodipicolinate + NADH + H(+). The catalysed reaction is (S)-2,3,4,5-tetrahydrodipicolinate + NADP(+) + H2O = (2S,4S)-4-hydroxy-2,3,4,5-tetrahydrodipicolinate + NADPH + H(+). It participates in amino-acid biosynthesis; L-lysine biosynthesis via DAP pathway; (S)-tetrahydrodipicolinate from L-aspartate: step 4/4. Its function is as follows. Catalyzes the conversion of 4-hydroxy-tetrahydrodipicolinate (HTPA) to tetrahydrodipicolinate. This chain is 4-hydroxy-tetrahydrodipicolinate reductase, found in Polynucleobacter necessarius subsp. necessarius (strain STIR1).